We begin with the raw amino-acid sequence, 299 residues long: Tricarboxylate transport protein (299 aa).

Solcar repeat units follow at residues 10–97 (VDPL…IKDM), 109–199 (TRGV…IKTL), and 212–297 (LSSG…VLVM). The next 6 membrane-spanning stretches (helical) occupy residues 16 to 36 (FLAG…FEFA), 66 to 86 (IGSI…KAGI), 113 to 133 (IAGL…FEAI), 174 to 193 (GVLP…LGCY), 215 to 235 (GLTF…TMPL), and 272 to 291 (GATP…FTIY).

This sequence belongs to the mitochondrial carrier (TC 2.A.29) family.

It is found in the mitochondrion inner membrane. Transport of citrate across inner mitochondrial membrane. The protein is Tricarboxylate transport protein (CTP1) of Saccharomyces cerevisiae (strain ATCC 204508 / S288c) (Baker's yeast).